The following is a 260-amino-acid chain: Cytochrome c oxidase subunit 2 (260 aa).

Topologically, residues 1-43 (MILRSLSCRFLTIALCDAAEPWQLGFQDAATPMMQGIIDLHHD) are mitochondrial intermembrane. Residues 44–64 (IFFFLILILVFVLWMLVRALW) traverse the membrane as a helical segment. At 65–84 (HFNEQTNPIPQRIVHGTTIE) the chain is on the mitochondrial matrix side. Residues 85 to 105 (IIWTIFPSVILLFIAIPSFAL) form a helical membrane-spanning segment. The Mitochondrial intermembrane segment spans residues 106 to 260 (LYSMDGVLVD…VSNQLILQTN (155 aa)). Positions 189, 224, 226, 228, 232, and 235 each coordinate Cu cation. E226 is a Mg(2+) binding site.

Belongs to the cytochrome c oxidase subunit 2 family. In terms of assembly, component of the cytochrome c oxidase (complex IV, CIV), a multisubunit enzyme composed of a catalytic core of 3 subunits and several supernumerary subunits. The complex exists as a monomer or a dimer and forms supercomplexes (SCs) in the inner mitochondrial membrane with ubiquinol-cytochrome c oxidoreductase (cytochrome b-c1 complex, complex III, CIII). Cu cation serves as cofactor.

The protein localises to the mitochondrion inner membrane. The enzyme catalyses 4 Fe(II)-[cytochrome c] + O2 + 8 H(+)(in) = 4 Fe(III)-[cytochrome c] + 2 H2O + 4 H(+)(out). Component of the cytochrome c oxidase, the last enzyme in the mitochondrial electron transport chain which drives oxidative phosphorylation. The respiratory chain contains 3 multisubunit complexes succinate dehydrogenase (complex II, CII), ubiquinol-cytochrome c oxidoreductase (cytochrome b-c1 complex, complex III, CIII) and cytochrome c oxidase (complex IV, CIV), that cooperate to transfer electrons derived from NADH and succinate to molecular oxygen, creating an electrochemical gradient over the inner membrane that drives transmembrane transport and the ATP synthase. Cytochrome c oxidase is the component of the respiratory chain that catalyzes the reduction of oxygen to water. Electrons originating from reduced cytochrome c in the intermembrane space (IMS) are transferred via the dinuclear copper A center (CU(A)) of subunit 2 and heme A of subunit 1 to the active site in subunit 1, a binuclear center (BNC) formed by heme A3 and copper B (CU(B)). The BNC reduces molecular oxygen to 2 water molecules using 4 electrons from cytochrome c in the IMS and 4 protons from the mitochondrial matrix. The chain is Cytochrome c oxidase subunit 2 (COX2) from Triticum aestivum (Wheat).